The chain runs to 609 residues: mRNA-decapping enzyme 1B (609 aa).

Residue alanine 2 is modified to N-acetylalanine. Serine 147 carries the post-translational modification Phosphoserine. Residue tyrosine 191 is modified to Phosphotyrosine. 2 disordered regions span residues 201–222 and 243–264; these read PVKP…LDPE and TVEP…LPIR. Over residues 205–219 the composition is skewed to polar residues; that stretch reads SENQQQRIPQPNQTL. Phosphoserine occurs at positions 272 and 333. 2 disordered regions span residues 326 to 345 and 359 to 438; these read TGPV…GVQN and TPGA…SSGV. Positions 336–345 are enriched in polar residues; that stretch reads NIGTSRGVQN. The span at 368–378 shows a compositional bias: low complexity; that stretch reads PSTPAPASSAA. The residue at position 389 (threonine 389) is a Phosphothreonine. Polar residues predominate over residues 418-438; that stretch reads QSTLPRQTLPISGNQTGSSGV. A phosphoserine mark is found at serine 440 and serine 503.

It belongs to the DCP1 family. Interacts with DCP1A.

It is found in the cytoplasm. It localises to the nucleus. It carries out the reaction a 5'-end (N(7)-methyl 5'-triphosphoguanosine)-ribonucleoside in mRNA + H2O = N(7)-methyl-GDP + a 5'-end phospho-ribonucleoside in mRNA + 2 H(+). In terms of biological role, may play a role in the degradation of mRNAs, both in normal mRNA turnover and in nonsense-mediated mRNA decay. May remove the 7-methyl guanine cap structure from mRNA molecules, yielding a 5'-phosphorylated mRNA fragment and 7m-GDP. The chain is mRNA-decapping enzyme 1B (DCP1B) from Pongo abelii (Sumatran orangutan).